Consider the following 601-residue polypeptide: Elongation factor 4 (601 aa).

Residues 7–189 (KNIRNFSIVA…AIVTRLPPPM (183 aa)) form the tr-type G domain. Residues 19 to 24 (DHGKST) and 136 to 139 (NKVD) each bind GTP.

This sequence belongs to the TRAFAC class translation factor GTPase superfamily. Classic translation factor GTPase family. LepA subfamily.

Its subcellular location is the cell inner membrane. It catalyses the reaction GTP + H2O = GDP + phosphate + H(+). In terms of biological role, required for accurate and efficient protein synthesis under certain stress conditions. May act as a fidelity factor of the translation reaction, by catalyzing a one-codon backward translocation of tRNAs on improperly translocated ribosomes. Back-translocation proceeds from a post-translocation (POST) complex to a pre-translocation (PRE) complex, thus giving elongation factor G a second chance to translocate the tRNAs correctly. Binds to ribosomes in a GTP-dependent manner. This Xanthobacter autotrophicus (strain ATCC BAA-1158 / Py2) protein is Elongation factor 4.